A 99-amino-acid chain; its full sequence is Large ribosomal subunit protein uL23cz/uL23cy (99 aa).

Residues 1–37 (MGGVENPVSTDKAIRLPERKQYSSNAEPNPSKTEVKR) form a disordered region. Positions 12–21 (KAIRLPERKQ) are enriched in basic and acidic residues. Positions 22-32 (YSSNAEPNPSK) are enriched in polar residues.

The protein belongs to the universal ribosomal protein uL23 family. In terms of assembly, part of the 50S ribosomal subunit.

It is found in the plastid. It localises to the chloroplast. Its function is as follows. Binds to 23S rRNA. This chain is Large ribosomal subunit protein uL23cz/uL23cy (rpl23-A), found in Selaginella uncinata (Blue spike-moss).